Consider the following 384-residue polypeptide: MAVQKIIITPILVFLVTIFFNVSSSSSSNNSQYQFLNHGVRSAYWPAGDDFSPSLIDTNYFTHILLAFIQPEPISFKLEITKSGIKWGQNFIKALRHRSPPVKTLLSIGGGGSNSTLFSEIASTKQNREIFINSTIEVARKYRFDGVDLDWEFPETQQDMFNLGLLYEEWYNALFAEAKVRRKPRLLLTSAVYYNSTVRLIGKHGPRSYPTQAINKYLDWASPMCFDYHGTWDNNTDFNAALYDSKSEISTNFGLHSWIKSGVRPEKLVMGLALYGRAWELKDPNVNGVGAEAVGPATDTDGSMNYNEILKFNKQSGANVVYDKVAISFYSYAGTTWIGYDDGPSITTKVRFAKSLGLKGYFFWALGKDKDWSISKQASNAWGH.

Positions 1-27 are cleaved as a signal peptide; that stretch reads MAVQKIIITPILVFLVTIFFNVSSSSS. Residues Asn29, Asn114, and Asn133 are each glycosylated (N-linked (GlcNAc...) asparagine). Residues 39–384 form the GH18 domain; that stretch reads GVRSAYWPAG…SKQASNAWGH (346 aa). Residue Glu152 is the Proton donor of the active site. 2 N-linked (GlcNAc...) asparagine glycosylation sites follow: Asn195 and Asn234.

The protein belongs to the glycosyl hydrolase 18 family. Chitinase class V subfamily.

It catalyses the reaction Random endo-hydrolysis of N-acetyl-beta-D-glucosaminide (1-&gt;4)-beta-linkages in chitin and chitodextrins.. The protein operates within glycan degradation; chitin degradation. Possesses chitinase activity in vitro toward glycol chitin, carboxymethyl-chitin, colloidal chitin, and the chitin oligosaccharides (N-acetylglucosamine) (GlcNAc)6 and (GlcNAc)5. Hydrolyzes (GlcNAc)6 into (GlcNAc)4 and (GlcNAc)2, or two (GlcNAc)3 molecules. Has the capacity to inhibit hyphal growth of the fungus Trichoderma viride in an agar-plate bioassay. This Medicago truncatula (Barrel medic) protein is Class V chitinase CHIT5a.